The sequence spans 341 residues: MTGLTVALDAMGGDFGPQVIVPAAVQALLQYPELKIKLYGDHSAITAQLSLLNQHSYSRISIIHSDLVIADETRPSHALRRSQGTSMRMALDAVSDGEADACVSAGNTGALMALSRYTLKQLPGVDRPALVSAIPTHGLNKTWLLDLGANVSCDADTLFQFAVMGSVLAEQSLTSKPRVALLNIGEEEIKGNDLVKRCAEMLSNSPDIHYIGYIEGDQLYAGKADVIVCDGFVGNVSLKTSEGVANLFINSFKQTISTNPMKRLLAKWLFRDLFVSLKKLNPDQYNGASLLGLRGIVVKSHGRADTAAFANAIGEAVHEVKRQIPTKISDRLEEVLLERHY.

Belongs to the PlsX family. Homodimer. Probably interacts with PlsY.

The protein localises to the cytoplasm. It carries out the reaction a fatty acyl-[ACP] + phosphate = an acyl phosphate + holo-[ACP]. It functions in the pathway lipid metabolism; phospholipid metabolism. Catalyzes the reversible formation of acyl-phosphate (acyl-PO(4)) from acyl-[acyl-carrier-protein] (acyl-ACP). This enzyme utilizes acyl-ACP as fatty acyl donor, but not acyl-CoA. The sequence is that of Phosphate acyltransferase from Photobacterium profundum (strain SS9).